The sequence spans 257 residues: Ribonuclease PH (257 aa).

Phosphate-binding positions include Arg86 and 124–126 (GTR).

This sequence belongs to the RNase PH family. As to quaternary structure, homohexameric ring arranged as a trimer of dimers.

It catalyses the reaction tRNA(n+1) + phosphate = tRNA(n) + a ribonucleoside 5'-diphosphate. Functionally, phosphorolytic 3'-5' exoribonuclease that plays an important role in tRNA 3'-end maturation. Removes nucleotide residues following the 3'-CCA terminus of tRNAs; can also add nucleotides to the ends of RNA molecules by using nucleoside diphosphates as substrates, but this may not be physiologically important. Probably plays a role in initiation of 16S rRNA degradation (leading to ribosome degradation) during starvation. The sequence is that of Ribonuclease PH from Sulfurihydrogenibium sp. (strain YO3AOP1).